Here is a 185-residue protein sequence, read N- to C-terminus: Cell wall protein phiA (185 aa).

Residues 1 to 18 (MQIKSFVLAASAAATASA) form the signal peptide. A glycan (N-linked (GlcNAc...) asparagine) is linked at Asn-60.

The protein belongs to the phiA family.

The protein localises to the secreted. It localises to the cell wall. Cell wall protein involved in development of asexual structures such as phialide and conidium development, and thus required for spore formation. Plays a role as a general stress protectant produced by the fungus in competition with antagonistic bacteria. This Aspergillus fumigatus (strain CBS 144.89 / FGSC A1163 / CEA10) (Neosartorya fumigata) protein is Cell wall protein phiA.